We begin with the raw amino-acid sequence, 361 residues long: AT-hook motif nuclear-localized protein 12 (361 aa).

Disordered stretches follow at residues 29-143 (SQVA…GRKQ) and 286-361 (NNKT…LTRG). A compositionally biased stretch (polar residues) spans 48–59 (SNPNIHHPQANN). A compositionally biased stretch (pro residues) spans 85–95 (QPPPPPPPPEE). The Bipartite nuclear localization signal signature appears at 99–107 (KRKRGRPRK). DNA-binding regions (a.T hook) lie at residues 99–111 (KRKR…YGEP) and 130–142 (KRAR…TGRK). Positions 154–297 (TSAGLAFAPH…KTIRQEKEPN (144 aa)) constitute a PPC domain. The span at 306-322 (ETTPGSAAEPAASAGQQ) shows a compositional bias: low complexity.

Homodimer. Interacts with AHL27, AHL29 and ATAF2/NAC081.

It localises to the nucleus. Functionally, transcription factor that specifically binds AT-rich DNA sequences related to the nuclear matrix attachment regions (MARs). This Arabidopsis thaliana (Mouse-ear cress) protein is AT-hook motif nuclear-localized protein 12.